The primary structure comprises 152 residues: Calmodulin-like protein 2 (152 aa).

EF-hand domains follow at residues 1–36, 37–72, 74–109, and 112–147; these read MDRGELSRVFQMFDKNGDGKIAKNELKDFFKSVGIM, VPENEINEMIAKMDVNGDGAMDIDEFGSLYQEMVEE, EEEEDMREAFRVFDQNGDGFITDEELRSVLASMGLK, and RTLEDCKKMISKVDVDGDGMVNFKEFKQMMRGGGFA. The Ca(2+) site is built by D14, N16, D18, K20, E25, D50, N52, D54, E61, D87, N89, D91, E98, D125, D127, D129, M131, and E136.

It belongs to the calmodulin family.

Potential calcium sensor that is required for pollen tube attraction for ovule fertilization. The protein is Calmodulin-like protein 2 (CML2) of Arabidopsis thaliana (Mouse-ear cress).